We begin with the raw amino-acid sequence, 30 residues long: NADH-ubiquinone oxidoreductase 18 kDa subunit (30 aa).

Complex I is composed of about 45 different subunits.

It is found in the mitochondrion inner membrane. It carries out the reaction a ubiquinone + NADH + 5 H(+)(in) = a ubiquinol + NAD(+) + 4 H(+)(out). Transfer of electrons from NADH to the respiratory chain. The immediate electron acceptor for the enzyme is believed to be ubiquinone. The chain is NADH-ubiquinone oxidoreductase 18 kDa subunit from Solanum tuberosum (Potato).